Here is a 159-residue protein sequence, read N- to C-terminus: Growth arrest and DNA damage-inducible protein GADD45 gamma (159 aa).

The tract at residues 43-86 (VYESAKVLNVDPDNVTFCVLAAGEEDEGDIALQIHFTLIQAFCC) is homodimerization.

This sequence belongs to the GADD45 family. As to quaternary structure, undergoes concentration-dependent homodimerization, which is required for growth inhibititory activity and enhances interaction with PCNA. Interacts with GADD45GIP1. Interacts with PCNA.

Functionally, involved in the regulation of growth and apoptosis. Mediates activation of stress-responsive MTK1/MEKK4 MAPKKK. In Homo sapiens (Human), this protein is Growth arrest and DNA damage-inducible protein GADD45 gamma (GADD45G).